A 356-amino-acid chain; its full sequence is Histidine biosynthesis bifunctional protein HisB (356 aa).

Positions 1–166 (MSKKVLFIDR…AICNYLTSLN (166 aa)) are histidinol-phosphatase. Aspartate 9 serves as the catalytic Nucleophile. Positions 9 and 11 each coordinate Mg(2+). Aspartate 11 serves as the catalytic Proton donor. Residues cysteine 93, histidine 95, cysteine 101, and cysteine 103 each contribute to the Zn(2+) site. Aspartate 130 is a binding site for Mg(2+). Residues 167–356 (RYAHVKRITK…VLPSSKGVLS (190 aa)) form an imidazoleglycerol-phosphate dehydratase region.

In the N-terminal section; belongs to the histidinol-phosphatase family. It in the C-terminal section; belongs to the imidazoleglycerol-phosphate dehydratase family. Mg(2+) is required as a cofactor. Zn(2+) serves as cofactor.

It localises to the cytoplasm. The enzyme catalyses D-erythro-1-(imidazol-4-yl)glycerol 3-phosphate = 3-(imidazol-4-yl)-2-oxopropyl phosphate + H2O. It catalyses the reaction L-histidinol phosphate + H2O = L-histidinol + phosphate. Its pathway is amino-acid biosynthesis; L-histidine biosynthesis; L-histidine from 5-phospho-alpha-D-ribose 1-diphosphate: step 6/9. It participates in amino-acid biosynthesis; L-histidine biosynthesis; L-histidine from 5-phospho-alpha-D-ribose 1-diphosphate: step 8/9. In Baumannia cicadellinicola subsp. Homalodisca coagulata, this protein is Histidine biosynthesis bifunctional protein HisB.